Reading from the N-terminus, the 426-residue chain is Gamma-glutamyl phosphate reductase (426 aa).

It belongs to the gamma-glutamyl phosphate reductase family.

It is found in the cytoplasm. The catalysed reaction is L-glutamate 5-semialdehyde + phosphate + NADP(+) = L-glutamyl 5-phosphate + NADPH + H(+). It functions in the pathway amino-acid biosynthesis; L-proline biosynthesis; L-glutamate 5-semialdehyde from L-glutamate: step 2/2. Catalyzes the NADPH-dependent reduction of L-glutamate 5-phosphate into L-glutamate 5-semialdehyde and phosphate. The product spontaneously undergoes cyclization to form 1-pyrroline-5-carboxylate. This is Gamma-glutamyl phosphate reductase from Sorangium cellulosum (strain So ce56) (Polyangium cellulosum (strain So ce56)).